We begin with the raw amino-acid sequence, 541 residues long: Chaperonin GroEL (541 aa).

Residues 29–32 (TLGP), 86–90 (DGTTT), Gly-413, 476–478 (NAA), and Asp-492 contribute to the ATP site.

It belongs to the chaperonin (HSP60) family. As to quaternary structure, forms a cylinder of 14 subunits composed of two heptameric rings stacked back-to-back. Interacts with the co-chaperonin GroES.

Its subcellular location is the cytoplasm. It carries out the reaction ATP + H2O + a folded polypeptide = ADP + phosphate + an unfolded polypeptide.. Its function is as follows. Together with its co-chaperonin GroES, plays an essential role in assisting protein folding. The GroEL-GroES system forms a nano-cage that allows encapsulation of the non-native substrate proteins and provides a physical environment optimized to promote and accelerate protein folding. This Enterococcus faecalis (strain ATCC 700802 / V583) protein is Chaperonin GroEL.